The primary structure comprises 424 residues: Endoglucanase (424 aa).

The N-terminal stretch at 1–19 is a signal peptide; the sequence is MHRCMPLVAASMAALMLAG. The N-palmitoyl cysteine moiety is linked to residue Cys20. The S-diacylglycerol cysteine moiety is linked to residue Cys20. Positions 20–43 are excised as a propeptide; sequence CGGGDGDTTLSTAAATDTTTLKTA. The active-site Proton donor is the Glu247. The Nucleophile role is filled by Glu359.

The protein belongs to the glycosyl hydrolase 5 (cellulase A) family.

It is found in the cell membrane. The catalysed reaction is Endohydrolysis of (1-&gt;4)-beta-D-glucosidic linkages in cellulose, lichenin and cereal beta-D-glucans.. The protein is Endoglucanase (egl) of Ralstonia nicotianae (strain ATCC BAA-1114 / GMI1000) (Ralstonia solanacearum).